A 172-amino-acid chain; its full sequence is NADH-quinone oxidoreductase subunit B (172 aa).

Residues Cys46, Cys47, Cys111, and Cys141 each coordinate [4Fe-4S] cluster.

Belongs to the complex I 20 kDa subunit family. In terms of assembly, NDH-1 is composed of 14 different subunits. Subunits NuoB, C, D, E, F, and G constitute the peripheral sector of the complex. [4Fe-4S] cluster serves as cofactor.

It localises to the cell membrane. The enzyme catalyses a quinone + NADH + 5 H(+)(in) = a quinol + NAD(+) + 4 H(+)(out). Its function is as follows. NDH-1 shuttles electrons from NADH, via FMN and iron-sulfur (Fe-S) centers, to quinones in the respiratory chain. The immediate electron acceptor for the enzyme in this species is believed to be a menaquinone. Couples the redox reaction to proton translocation (for every two electrons transferred, four hydrogen ions are translocated across the cytoplasmic membrane), and thus conserves the redox energy in a proton gradient. The protein is NADH-quinone oxidoreductase subunit B of Bacillus cytotoxicus (strain DSM 22905 / CIP 110041 / 391-98 / NVH 391-98).